A 368-amino-acid chain; its full sequence is METTSANFTQNDSNVCTNLYNHRGWAQYFLPAMYSLICIVGLLGNVLALHVIWPNLKKINSTTLYSANLVVSDILFSLALPLRVVYYARGFDWPMGEGLCKAVALLFYINMYAGVNFMTCLSVDRFIAVVLPLRFSRFRKVQKVRYICGVVWVVVLMQTLPLLSMPMTNIEQSGHITCMEYPNFEKIDNLPVMLIGAVVLGFGIPVITILVCYTALCLKLRHLAKSNKLTEKSGRSSKAIGVICTVILVFVVCYSPYHVDLLQYMIKKLRYDPDCSELHKFQISLHITVCFMNLNSCLDPFIYFFACKGYKKKVLKLLKKQVSMSFSSVVRTSPEGSSKDVFGNDKIQMNSRSFQKERSSVLLNSLEQ.

Residues 1–27 (METTSANFTQNDSNVCTNLYNHRGWAQ) are Extracellular-facing. Asn-7 and Asn-11 each carry an N-linked (GlcNAc...) asparagine glycan. Residues 28 to 53 (YFLPAMYSLICIVGLLGNVLALHVIW) form a helical membrane-spanning segment. The Cytoplasmic segment spans residues 54-73 (PNLKKINSTTLYSANLVVSD). A helical membrane pass occupies residues 74-91 (ILFSLALPLRVVYYARGF). Residues 92–101 (DWPMGEGLCK) are Extracellular-facing. Cys-100 and Cys-178 are joined by a disulfide. Residues 102 to 123 (AVALLFYINMYAGVNFMTCLSV) form a helical membrane-spanning segment. The Cytoplasmic segment spans residues 124–145 (DRFIAVVLPLRFSRFRKVQKVR). Residues 146–164 (YICGVVWVVVLMQTLPLLS) traverse the membrane as a helical segment. Topologically, residues 165–189 (MPMTNIEQSGHITCMEYPNFEKIDN) are extracellular. The helical transmembrane segment at 190–212 (LPVMLIGAVVLGFGIPVITILVC) threads the bilayer. The Cytoplasmic portion of the chain corresponds to 213 to 238 (YTALCLKLRHLAKSNKLTEKSGRSSK). A helical transmembrane segment spans residues 239-262 (AIGVICTVILVFVVCYSPYHVDLL). At 263–282 (QYMIKKLRYDPDCSELHKFQ) the chain is on the extracellular side. A helical membrane pass occupies residues 283-307 (ISLHITVCFMNLNSCLDPFIYFFAC). The Cytoplasmic portion of the chain corresponds to 308–368 (KGYKKKVLKL…SSVLLNSLEQ (61 aa)).

The protein belongs to the G-protein coupled receptor 1 family.

It is found in the cell membrane. In terms of biological role, G-protein coupled receptor expressed in lymphocytes that acts as a chemotactic receptor for B-cells, T-cells, splenic dendritic cells, monocytes/macrophages and astrocytes. Receptor for oxysterol 7-alpha,25-dihydroxycholesterol (7-alpha,25-OHC) and other related oxysterols. Mediates cell positioning and movement of a number of cells by binding the 7-alpha,25-OHC ligand that forms a chemotactic gradient. Binding of 7-alpha,25-OHC mediates the correct localization of B-cells during humoral immune responses. This is G-protein coupled receptor 183-A (gpr183a) from Danio rerio (Zebrafish).